The sequence spans 244 residues: Cell division protein ZipA (244 aa).

At Met1–Met4 the chain is on the periplasmic side. The helical transmembrane segment at Ala5 to Phe25 threads the bilayer. At Gly26–Trp244 the chain is on the cytoplasmic side. Residues Lys30 to Arg91 are disordered. Residues Arg35 to Pro50 show a composition bias toward basic and acidic residues.

Belongs to the ZipA family. In terms of assembly, interacts with FtsZ via their C-terminal domains.

The protein localises to the cell inner membrane. Functionally, essential cell division protein that stabilizes the FtsZ protofilaments by cross-linking them and that serves as a cytoplasmic membrane anchor for the Z ring. Also required for the recruitment to the septal ring of downstream cell division proteins. The chain is Cell division protein ZipA from Xanthomonas campestris pv. campestris (strain ATCC 33913 / DSM 3586 / NCPPB 528 / LMG 568 / P 25).